A 98-amino-acid chain; its full sequence is ESAT-6-like protein EsxK (98 aa).

This sequence belongs to the WXG100 family. CFP-10 subfamily. Strongly interacts with EsxL to form a heterodimeric complex under reducing conditions.

The protein resides in the secreted. The protein is ESAT-6-like protein EsxK of Mycobacterium tuberculosis (strain CDC 1551 / Oshkosh).